The following is a 462-amino-acid chain: Argininosuccinate lyase (462 aa).

The protein belongs to the lyase 1 family. Argininosuccinate lyase subfamily.

The protein resides in the cytoplasm. It catalyses the reaction 2-(N(omega)-L-arginino)succinate = fumarate + L-arginine. The protein operates within amino-acid biosynthesis; L-arginine biosynthesis; L-arginine from L-ornithine and carbamoyl phosphate: step 3/3. The chain is Argininosuccinate lyase from Exiguobacterium sp. (strain ATCC BAA-1283 / AT1b).